A 166-amino-acid chain; its full sequence is Cold-inducible RNA-binding protein B (166 aa).

Residues 5–83 (GKLFIGGLNF…RQIRVDQAGK (79 aa)) enclose the RRM domain. The tract at residues 68 to 166 (GKAVDGRQIR…DSYDSYATHE (99 aa)) is disordered. The segment covering 92-115 (YRGGSSGGRGFFRGGRGRGGGDRG) has biased composition (gly residues). Residues 133–149 (GSRDYYSSGRSQGSYGD) show a composition bias toward low complexity. Residues 157-166 (DSYDSYATHE) show a composition bias toward basic and acidic residues.

Interacts with prmt1. Interacts with elavl1/elrA (via RRM3). Associates with ribosomes. Post-translationally, methylated on arginine residues within RGG motifs. Methylation by prmt1 promotes cytoplasmic accumulation. In terms of tissue distribution, in adults, most abundant in testis, ovary, brain and liver, with lower expression in kidney and heart.

It is found in the nucleus. Its subcellular location is the nucleoplasm. The protein localises to the cytoplasm. Its function is as follows. Cold-inducible mRNA binding protein. Acts cooperatively with elavl1/elrA to stabilize AU-rich element (ARE)-containing mRNAs by binding to them and inhibiting their deadenylation. Essential for embryonic gastrulation and neural development, acting to maintain the expression of a set of adhesion molecules, and cell movement during embryogenesis. Required for pronephros development. The protein is Cold-inducible RNA-binding protein B (cirbp-b) of Xenopus laevis (African clawed frog).